The chain runs to 411 residues: RING-H2 finger protein ATL65 (411 aa).

The interval 1–32 is disordered; that stretch reads MRFVAPPPRSGDNSPSPSPSSGISEEILSRSS. A compositionally biased stretch (low complexity) spans 10-21; the sequence is SGDNSPSPSPSS. A helical transmembrane segment spans residues 36–56; that stretch reads LEFSPPLIAMVVVLAAAFLFV. The RING-type; atypical zinc finger occupies 156–198; the sequence is CAVCLLEFEEGDYVRTLPLCFHAFHLECIDEWLRSHPNCPLCR.

This sequence belongs to the RING-type zinc finger family. ATL subfamily.

Its subcellular location is the membrane. It carries out the reaction S-ubiquitinyl-[E2 ubiquitin-conjugating enzyme]-L-cysteine + [acceptor protein]-L-lysine = [E2 ubiquitin-conjugating enzyme]-L-cysteine + N(6)-ubiquitinyl-[acceptor protein]-L-lysine.. It functions in the pathway protein modification; protein ubiquitination. This chain is RING-H2 finger protein ATL65 (ATL65), found in Arabidopsis thaliana (Mouse-ear cress).